Reading from the N-terminus, the 666-residue chain is Peptidase S41 family protein phomP1' (666 aa).

A signal peptide spans 1-27; that stretch reads MSSFLVQTAVVRLFLLGVVFWFPFALS. Asn-70, Asn-214, and Asn-234 each carry an N-linked (GlcNAc...) asparagine glycan. The interval 303–504 is peptidase S41 domain; the sequence is DVAVLQITSF…LLQAQGVRTV (202 aa). N-linked (GlcNAc...) asparagine glycans are attached at residues Asn-555 and Asn-612.

This sequence belongs to the peptidase S41A family.

Its pathway is mycotoxin biosynthesis. Its function is as follows. Peptidase S41 family protein; part of the gene cluster that mediates the biosynthesis of the phomopsins, a group of hexapeptide mycotoxins which infects lupins and causes lupinosis disease in livestock. Within the pathway, phomP1 and phomP1' are probably involved in the processing of the phomA and phomA' precursors. The pathway starts with the processing of the precursor phomA by several endopeptidases including kexin proteases as well as the cluster-specific S41 family peptidase phomP1 and the oligopeptidase phomG to produce 10 identical copies of the hexapeptide Tyr-Val-Ile-Pro-Ile-Asp. After being excised from the precursor peptide, the core peptides are cyclized and modified post-translationally by enzymes encoded within the gene cluster. The timing and order of proteolysis of the phomA precursor and PTMs are still unknown. Two tyrosinase-like enzymes, phomQ1 and phomQ2, catalyze the chlorination and hydroxylation of Tyr, respectively. PhomYb, is proposed to be involved in the construction of the macrocyclic structure. The other 4 ustYa family proteins may be involved in PTMs that generate the unique structure of phomopsin A. PhomYa is required for the hydroxylation of C-beta of Tyr. PhomYc, phomYd, and phomYe are responsible for the biosynthesis of 2,3-dehydroisoleucine (dIle), 2,3-dehydroaspartic acid (dAsp), and 3,4-dehydroproline (dPro), respectively. While dIle formation by phomYc is indispensable for the installation of dAsp by phomYd, the order of the other PTMs have not been elucidated yet. Most of the biosynthetic enzymes likely have broad substrate specificity, and thus, there might be a metabolic grid from a precursor to phomopsin A. The enzyme(s) responsible for the biosynthesis of 3,4-dehydrovaline (dVal) have also not been identified yet. Finally, phomM acts as an S-adenosylmethionine-dependent alpha-N-methyltransferase that catalyzes two successive N-methylation reactions, converting N-desmethyl-phomopsin A to phomopsin A and phomopsin A further to an N,N-dimethylated congener called phomopsin E. In Diaporthe leptostromiformis (Lupinosis disease fungus), this protein is Peptidase S41 family protein phomP1'.